A 67-amino-acid chain; its full sequence is Large ribosomal subunit protein uL29 (67 aa).

Belongs to the universal ribosomal protein uL29 family.

The protein is Large ribosomal subunit protein uL29 of Desulfitobacterium hafniense (strain DSM 10664 / DCB-2).